The following is a 585-amino-acid chain: MAAAAPAAAGEDGRRRLPGAALDIQPQEGAKVEAESGELERLRAELAGALAEMETMKAVAEVSESTKAEAVAAVQRQCQEEVASLQAILKDSISSYEAQITSLKQERQQQQQDCEEKERELGRLKQLLSRAHPLDSLEKQMEKAHEDSEKLREIVLPMEQEIEELKAKLLRAEELIQEIQRRPRHPPSLHGSTELLLSRDPSPPLEPLEELSEDGGPAAEAFAHNCDDSASISSFSLGGGASGRASLPRSRQGLSPEQEETASLVSTGTLVPEGIYLPPPGYQLVPDNQWEQLQLEGRQLQKDLESISRERDELQEGLRRSNEDCAKQMQVLLAQVQNSEQLLRTLQGTVSQAQERVQLQMAELANSHKCLSHEVKRLTEENQGLRAEQPSSSVPRVLEQDEGWEESLPSSLPELQQLVRRTQQEARARQQAQEHEAERLRIEIVTLREALDEETAARASLEGQLRVQREETEVLEASLCSLRMEMERVQEEQSKAKRQEVLRPSQGTGRTEEAQLTDLLSEQRAKMLRLQAELETSEQVQRDFVRLSQALQVRLERIRQAGSLEQVRGIIDEAPLRDVRDIKDT.

An N-acetylalanine modification is found at alanine 2. Positions 27–183 (QEGAKVEAES…ELIQEIQRRP (157 aa)) form a coiled coil. Disordered stretches follow at residues 178–265 (EIQR…ASLV), 381–408 (ENQGLRAEQPSSSVPRVLEQDEGWEESL), and 491–515 (EEQSKAKRQEVLRPSQGTGRTEEAQ). A phosphoserine mark is found at serine 188, serine 192, serine 198, and serine 202. Positions 288-540 (NQWEQLQLEG…QAELETSEQV (253 aa)) form a coiled coil. A compositionally biased stretch (basic and acidic residues) spans 491–501 (EEQSKAKRQEV).

This sequence belongs to the rabaptin family. In terms of assembly, heterodimer with RABGEF1. The dimer binds RAB5A that has been activated by GTP-binding. Interacts with SDCCAG8; this interaction is important for ciliogenesis regulation. Interacts with RAB4; this interaction may mediate VEGFR2 cell surface expression.

Its subcellular location is the cytoplasm. It is found in the early endosome. The protein localises to the cytoskeleton. It localises to the microtubule organizing center. The protein resides in the centrosome. Its subcellular location is the cilium basal body. In terms of biological role, plays a role in membrane trafficking and in homotypic early endosome fusion. Participates in arteriogenesis by regulating vascular endothelial growth factor receptor 2/VEGFR2 cell surface expression and endosomal trafficking. By interacting with SDCCAG8, localizes to centrosomes and plays a critical role in ciliogenesis. The polypeptide is Rab GTPase-binding effector protein 2 (RABEP2) (Bos taurus (Bovine)).